The sequence spans 267 residues: Neutrophil elastase (267 aa).

Positions 1–27 (MTLGRRLACLFLACVLPALLLGGTALA) are cleaved as a signal peptide. Positions 28-29 (SE) are excised as a propeptide. A Peptidase S1 domain is found at 30-247 (IVGGRRARPH…FVNWIDSIIQ (218 aa)). The cysteines at positions 55 and 71 are disulfide-linked. The active-site Charge relay system is the His-70. Asn-88 carries an N-linked (GlcNAc...) asparagine glycan. Residue Asp-117 is the Charge relay system of the active site. N-linked (GlcNAc...) asparagine glycosylation is found at Asn-124 and Asn-173. Intrachain disulfides connect Cys-151/Cys-208, Cys-181/Cys-187, and Cys-198/Cys-223. Ser-202 functions as the Charge relay system in the catalytic mechanism.

Belongs to the peptidase S1 family. Elastase subfamily. In terms of assembly, interacts with NOTCH2NL. Interacts with agaphelin, an antihemostatic protein from Anopheles gambiae. As to expression, bone marrow cells. Neutrophil.

It is found in the cytoplasmic vesicle. The protein localises to the phagosome. The enzyme catalyses Hydrolysis of proteins, including elastin. Preferential cleavage: Val-|-Xaa &gt; Ala-|-Xaa.. Functionally, serine protease that modifies the functions of natural killer cells, monocytes and granulocytes. Inhibits C5a-dependent neutrophil enzyme release and chemotaxis. Promotes cleavage of GSDMB, thereby inhibiting pyroptosis. Promotes blood coagulation. Through the activation of the platelet fibrinogen receptor integrin alpha-IIb/beta-3, potentiates platelet aggregation induced by a threshold concentration of cathepsin G (CTSG). Cleaves and thus inactivates tissue factor pathway inhibitor (TFPI). Capable of killing E.coli but not S.aureus in vitro; digests outer membrane protein A (ompA) in E.coli and K.pneumoniae. This is Neutrophil elastase (ELANE) from Homo sapiens (Human).